A 1146-amino-acid polypeptide reads, in one-letter code: Ankyrin repeat and fibronectin type-III domain-containing protein 1 (1146 aa).

2 ANK repeats span residues 133–162 (QGNE…PEEL) and 170–199 (EGLT…RESP). Residues 270–366 (MPTNVCLMVT…TTTPACASPS (97 aa)) form the Fibronectin type-III domain. The tract at residues 607–614 (GLYLGYLK) is highly conserved peptide sequence. Disordered stretches follow at residues 855–887 (NSTS…QPCS), 945–964 (VKTP…NPDH), and 1106–1146 (PWAS…SSML). The span at 1131–1146 (EGPTASPMSEILSSML) shows a compositional bias: polar residues.

In terms of biological role, may play a role in neuronal function. This Homo sapiens (Human) protein is Ankyrin repeat and fibronectin type-III domain-containing protein 1.